The sequence spans 190 residues: MDIKIDISISGDKFTVTTRRENEERKKYLPLQKEKTTDVIKPDYLEYDDLLDRDEMFTILEEYFMYRGLLGLRIKYGRLFNEIKKFDNDAEEQFGTIEELKQKLRLNSEEGADNFIDYIKVQKQDIVKLTVYDCISMIGLCACVVDVWRNEKLFSRWKYCLRAIKLFINDHMLDKIKSILQNRLVYVEMS.

The protein belongs to the orthopoxvirus A52R protein family. In terms of assembly, interacts with host TRAF6 and IRAK2.

In terms of biological role, bcl-2-like protein which targets host toll-like receptor signaling complexes to suppress innate immune response. Interacts with host TRAF6 to activate p38 and subsequently induce the expression of several cytokines such as IL-10. Also associates with host IRAK2 to inhibit NF-kappa-B signaling. The sequence is that of Protein A52 from Vaccinia virus (strain Western Reserve) (VACV).